The sequence spans 145 residues: Bacilliredoxin MW1318 (145 aa).

Belongs to the bacilliredoxin family.

This is Bacilliredoxin MW1318 from Staphylococcus aureus (strain MW2).